The sequence spans 273 residues: Shikimate dehydrogenase (NADP(+)) (273 aa).

Residues 15–17 (SKS) and Thr62 each bind shikimate. Lys66 functions as the Proton acceptor in the catalytic mechanism. Glu78 serves as a coordination point for NADP(+). Shikimate contacts are provided by Asn87 and Asp103. NADP(+)-binding positions include 127–131 (GAGGA), 150–155 (NRTQEK), and Met213. Tyr215 lines the shikimate pocket. Gly237 is a binding site for NADP(+).

This sequence belongs to the shikimate dehydrogenase family. Homodimer.

The enzyme catalyses shikimate + NADP(+) = 3-dehydroshikimate + NADPH + H(+). It participates in metabolic intermediate biosynthesis; chorismate biosynthesis; chorismate from D-erythrose 4-phosphate and phosphoenolpyruvate: step 4/7. Its function is as follows. Involved in the biosynthesis of the chorismate, which leads to the biosynthesis of aromatic amino acids. Catalyzes the reversible NADPH linked reduction of 3-dehydroshikimate (DHSA) to yield shikimate (SA). The chain is Shikimate dehydrogenase (NADP(+)) from Shewanella woodyi (strain ATCC 51908 / MS32).